The primary structure comprises 215 residues: Outer-membrane lipoprotein carrier protein (215 aa).

The signal sequence occupies residues 1 to 24; that stretch reads MFVLKARHLMAAGLVSLAAWSAGA.

The protein belongs to the LolA family. In terms of assembly, monomer.

Its subcellular location is the periplasm. Functionally, participates in the translocation of lipoproteins from the inner membrane to the outer membrane. Only forms a complex with a lipoprotein if the residue after the N-terminal Cys is not an aspartate (The Asp acts as a targeting signal to indicate that the lipoprotein should stay in the inner membrane). This Ralstonia nicotianae (strain ATCC BAA-1114 / GMI1000) (Ralstonia solanacearum) protein is Outer-membrane lipoprotein carrier protein.